We begin with the raw amino-acid sequence, 111 residues long: Iron-sulfur cluster assembly protein CyaY (111 aa).

This sequence belongs to the frataxin family.

Involved in iron-sulfur (Fe-S) cluster assembly. May act as a regulator of Fe-S biogenesis. The polypeptide is Iron-sulfur cluster assembly protein CyaY (Cupriavidus metallidurans (strain ATCC 43123 / DSM 2839 / NBRC 102507 / CH34) (Ralstonia metallidurans)).